We begin with the raw amino-acid sequence, 299 residues long: Nitrogenase iron protein (299 aa).

11–18 (GKGGIGKS) serves as a coordination point for ATP. Cys-99 serves as a coordination point for [4Fe-4S] cluster. Arg-102 is subject to ADP-ribosylarginine; by dinitrogenase reductase ADP-ribosyltransferase. [4Fe-4S] cluster is bound at residue Cys-133.

Belongs to the NifH/BchL/ChlL family. In terms of assembly, homodimer. It depends on [4Fe-4S] cluster as a cofactor. The reversible ADP-ribosylation of Arg-102 inactivates the nitrogenase reductase and regulates nitrogenase activity.

It catalyses the reaction N2 + 8 reduced [2Fe-2S]-[ferredoxin] + 16 ATP + 16 H2O = H2 + 8 oxidized [2Fe-2S]-[ferredoxin] + 2 NH4(+) + 16 ADP + 16 phosphate + 6 H(+). Functionally, the key enzymatic reactions in nitrogen fixation are catalyzed by the nitrogenase complex, which has 2 components: the iron protein and the molybdenum-iron protein. The chain is Nitrogenase iron protein from Rhodopseudomonas palustris (strain BisB5).